The chain runs to 1143 residues: MHGPVSRSSSSSNMTDVSSPAGGAASPVEMTTSSSSAATTSASSSKPLTNGANKTTISTVAGGVAPGAVPGPGSGAIPASSSSGNQVKLEHHHRQSNNNRPAATNRSSETKLRSPAGESDGASRLMTPAGSSSSPSQSPSQTQASIQTQTSQQDRLAKASTTASQQDVDEVARLFEEKPEAFEKWLTERAPPEALSRLQEFIENRKPHKRPSVTSDLFQQWMAASPTVQQKSPRSLSNSSASSLPECRRHLMDLDEGELFMELIRDVANELDIDVLCHKILVNVGLLTHADRGSLFLAKGTPTNKYLVAKLFDVTQKTALKDAVTRASAEEIIIPFGIGIAGMVAQTKQMINIKEAYKDARFNCEIDLKTGYKTNAILCMPICNYEGDIIGVAQIINKTNGCMEFDEHDVEIFRRYLTFCGIGIQNAQLFEMSVQEYRRNQILLNLARSIFEEQNNLECLVTKIMTEARELLKCERCSVFLVDLDCCEASHLEKIIEKPNQQATRAIKSADSFEEKKMRNRFTVLFELGGEYQAANVSRPSVSELSSSTLAQIAQFVATTGQTVNICDVIEWVRDHNQIRAEDEIDSTQAILCMPIMNAQKKVIGVAQLINKANGVPFTDSDASIFEAFAIFCGLGIHNTQMYENACKLMAKQKVALECLSYHATASQDQTEKLTQDVIAEAESYNLYSFTFTDFELVDDDTCRAVLRMFMQCNLVSQFQIPYDVLCRWVLSVRKNYRPVKYHNWRHALNVAQTMFAMLKTGKMERFMTDLEILGLLVACLCHDLDHRGTNNAFQTKTESPLAILYTTSTMEHHHFDQCVMILNSEGNNIFQALSPEDYRSVMKTVESAILSTDLAMYFKKRNAFLELVENGEFDWQGEEKKDLLCGMMMTACDVSAIAKPWEVQHKVAKLVADEFFDQGDLEKLQLNTQPVAMMDRERKDELPKMQVGFIDVICLPLYRVLCDTFPWITPLYEGTLENRRNWQDLAEKVEMGLTWIDHDTIDKPVEEFAACADEEIKDIEFTVTTLNCNQQSQHGSEDSHTPEHQRSGSRLSMKKTGALGKAVRSKLSKTLYNSMDGSKPKTSLKLLESHVSEDMDDKSPTSPSQPQASGSMGRMSASSSTSSTGGQMVDKSKKRSKLCALL.

Composition is skewed to low complexity over residues 1 to 19 and 31 to 45; these read MHGP…DVSS and TTSS…ASSS. The segment at 1–167 is disordered; the sequence is MHGPVSRSSS…KASTTASQQD (167 aa). The span at 46 to 59 shows a compositional bias: polar residues; the sequence is KPLTNGANKTTIST. The span at 75-84 shows a compositional bias: low complexity; sequence GAIPASSSSG. A compositionally biased stretch (polar residues) spans 96–107; the sequence is SNNNRPAATNRS. The segment covering 131–153 has biased composition (low complexity); it reads SSSSPSQSPSQTQASIQTQTSQQ. GAF domains are found at residues 272 to 424 and 456 to 637; these read DIDV…GIGI and NLEC…GLGI. A PDEase domain is found at 667–990; sequence SQDQTEKLTQ…RNWQDLAEKV (324 aa). His-743 functions as the Proton donor in the catalytic mechanism. 4 residues coordinate a divalent metal cation: His-747, His-783, Asp-784, and Asp-894. Disordered stretches follow at residues 1031 to 1060 and 1090 to 1143; these read QQSQ…TGAL and SHVS…CALL. Basic and acidic residues-rich tracts occupy residues 1036–1047 and 1090–1100; these read GSEDSHTPEHQR and SHVSEDMDDKS. The span at 1109-1127 shows a compositional bias: low complexity; the sequence is ASGSMGRMSASSSTSSTGG. The segment covering 1133-1143 has biased composition (basic residues); sequence SKKRSKLCALL. Cysteine methyl ester is present on Cys-1140. A lipid anchor (S-farnesyl cysteine) is attached at Cys-1140. The propeptide at 1141–1143 is removed in mature form; that stretch reads ALL.

The protein belongs to the cyclic nucleotide phosphodiesterase family. Interacts with PrBP. A divalent metal cation is required as a cofactor.

Its subcellular location is the cell membrane. The enzyme catalyses 3',5'-cyclic GMP + H2O = GMP + H(+). Functionally, has a role regulating cGMP transport in Malpighian tubule principal cells. This Drosophila simulans (Fruit fly) protein is cGMP-specific 3',5'-cyclic phosphodiesterase.